A 942-amino-acid polypeptide reads, in one-letter code: Cilia- and flagella-associated protein 69 (942 aa).

Over residues 1–16 (MSTAEASATTADAAEA) the composition is skewed to low complexity. A disordered region spans residues 1-25 (MSTAEASATTADAAEAGGRTKTGSP).

In terms of tissue distribution, expressed in ciliated olfactory sensory neurons (at protein level). Expressed in testis, specifically in sperm (at protein level).

It is found in the cell projection. Its subcellular location is the cilium. The protein resides in the flagellum. Cilium- and flagellum-associated protein. In the olfactory epithelium, regulates the speed of activation and termination of the odor response and thus contributes to the robustness of olfactory transduction pathways. Required for sperm flagellum assembly and stability. The chain is Cilia- and flagella-associated protein 69 from Mus musculus (Mouse).